The chain runs to 3432 residues: MTKKPGGPGKNRAINMLKRGLPRVFPLVGVKRVVMSLLDGRGPVRFVLALITFFKFTALAPTKALLGRWKAVEKSVAMKHLTSFKRELGTLIDAVNKRGRKQNKRGGNEGSIMWLASLAVVIACAGAMKLSNFQGKLLMTINNTDIADVIVIPTSKGENRCWVRAIDVGYMCEDTITYECPKLTMGNDPEDVDCWCDNQEVYVQYGRCTRTRHSKRSRRSVSVQTHGESSLVNKKEAWLDSTKATRYLMKTENWIIRNPGYAFLAAVLGWMLGSNNGQRVVFTILLLLVAPAYSFNCLGMGNRDFIEGASGATWVDLVLEGDSCLTIMANDKPTLDVRMINIEASQLAEVRSYCYHASVTDISTVARCPTTGEAHNEKRADSSYVCKQGFTDRGWGNGCGLFGKGSIDTCAKFSCTSKAIGRTIQPENIKYEVGIFVHGTTTSENHGNYSAQVGASQAAKFTVTPNAPSITLKLGDYGEVTLDCEPRSGLNTEAFYVMTVGSKSFLVHREWFHDLALPWTSPSSTAWRNRELLMEFEGAHATKQSVVALGSQEGGLHQALAGAIVVEYSSSVKLTSGHLKCRLKMDKLALKGTTYGMCTEKFSFAKNPADTGHGTVVIELSYSGSDGSCKIPIVSVASLNDMTPVGRLVTVNPFVATSSANSKVLVEMEPPFGDSYIVVGRGDKQINHHWHKAGSTLGKAFSTTLKGAQRLAALGDTAWDFGSIGGVFNSIGKAVHQVFGGAFRTLFGGMSWITQGLMGALLLWMGVNARDRSIALAFLATGGVLVFLATNVHADTGCAIDITRKEMRCGSGIFVHNDVEAWVDRYKYLPETPRSLAKIVHKAHKEGVCGVRSVTRLEHQMWEAVRDELNVLLKENAVDLSVVVNKPVGRYRSAPKRLSMTQEKFEMGWKAWGKSILFAPELANSTFVVDGPETKECPDEHRAWNSMQIEDFGFGITSTRVWLKIREESTDECDGAIIGTAVKGHVAVHSDLSYWIESRYNDTWKLERAVFGEVKSCTWPETHTLWGDDVEESELIIPHTIAGPKSKHNRREGYKTQNQGPWDENGIVLDFDYCPGTKVTITEDCGKRGPSVRTTTDSGKLITDWCCRSCSLPPLRFRTENGCWYGMEIRPVRHDETTLVRSQVDAFNGEMVDPFQLGLLVMFLATQEVLRKRWTARLTIPAVLGALLVLMLGGITYTDLARYVVLVAAAFAEANSGGDVLHLALIAVFKIQPAFLVMNMLSTRWTNQENVVLVLGAAFFQLASVDLQIGVHGILNAAAIAWMIVRAITFPTTSSVTMPVLALLTPGMRALYLDTYRIILLVIGICSLLHERKKTMAKKKGAVLLGLALTSTGWFSPTTIAAGLMVCNPNKKRGWPATEFLSAVGLMFAIVGGLAELDIESMSIPFMLAGLMAVSYVVSGKATDMWLERAADISWEMDAAITGSSRRLDVKLDDDGDFHLIDDPGVPWKVWVLRMSCIGLAALTPWAIVPAAFGYWLTLKTTKRGGVFWDTPSPKPCSKGDTTTGVYRIMARGILGTYQAGVGVMYENVFHTLWHTTRGAAIMSGEGKLTPYWGSVREDRIAYGGPWRFDRKWNGTDDVQVIVVEPGKAAVNIQTKPGVFRTPFGEVGAVSLDYPRGTSGSPILDSNGDIIGLYGNGVELGDGSYVSAIVQGDRQEEPVPEAYTPNMLRKRQMTVLDLHPGSGKTRKILPQIIKDAIQQRLRTAVLAPTRVVAAEMAEVLRGLPVRYQTSAVQREHQGNEIVDVMCHATLTHRLMSPNRVPNYNLFVMDEAHFTDPASIAARGYIATKVELGEAAAIFMTATPPGTTDPFPDSNAPIHDLQDEIPDRAWSSGYEWITEYAGKTVWFVASVKMGNEIAMCLQRAGKKVIQLNRKSYDTEYPKCKNGDWDFVITTDISEMGANFGASRVIDCRKSVKPTILEEGEGRVILGNPSPITSASAAQRRGRVGRNPNQVGDEYHYGGATSEDDSNLAHWTEAKIMLDNIHMPNGLVAQLYGPEREKAFTMDGEYRLRGEEKKNFLELLRTADLPVWLAYKVASNGIQYTDRKWCFDGPRTNAILEDNTEVEIVTRMGERKILKPRWLDARVYADHQALKWFKDFAAGKRSAVSFIEVLGRMPEHFMGKTREALDTMYLVATAEKGGKAHRMALEELPDALETITLIVAITVMTGGFFLLMMQRKGIGKMGLGALVLTLATFFLWAAEVPGTKIAGTLLIALLLMVVLIPEPEKQRSQTDNQLAVFLICVLTVVGVVAANEYGMLEKTKADLKSMFGGKTQASGLTGLPSMALDLRPATAWALYGGSTVVLTPLLKHLITSEYVTTSLASINSQAGSLFVLPRGVPFTDLDLTVGLVFLGCWGQITLTTFLTAMVLATLHYGYMLPGWQAEALRAAQRRTAAGIMKNAVVDGMVATDVPELERTTPLMQKKVGQVLLIGVSVAAFLVNPNVTTVREAGVLVTAATLTLWDNGASAVWNSTTATGLCHVMRGSYLAGGSIAWTLIKNADKPSLKRGRPGGRTLGEQWKEKLNAMSREEFFKYRREAIIEVDRTEARRARRENNIVGGHPVSRGSAKLRWLVEKGFVSPIGKVIDLGCGRGGWSYYAATLKKVQEVRGYTKGGAGHEEPMLMQSYGWNLVSLKSGVDVFYKPSEPSDTLFCDIGESSPSPEVEEQRTLRVLEMTSDWLHRGPREFCIKVLCPYMPKVIEKMEVLQRRFGGGLVRLPLSRNSNHEMYWVSGAAGNVVHAVNMTSQVLLGRMDRTVWRGPKYEEDVNLGSGTRAVGKGEVHSNQEKIKKRIQKLKEEFATTWHKDPEHPYRTWTYHGSYEVKATGSASSLVNGVVKLMSKPWDAIANVTTMAMTDTTPFGQQRVFKEKVDTKAPEPPAGAKEVLNETTNWLWAHLSREKRPRLCTKEEFIKKVNSNAALGAVFAEQNQWSTAREAVDDPRFWEMVDEERENHLRGECHTCIYNMMGKREKKPGEFGKAKGSRAIWFMWLGARYLEFEALGFLNEDHWLSRENSGGGVEGSGVQKLGYILRDIAGKQGGKMYADDTAGWDTRITRTDLENEAKVLELLDGEHRMLARAIIELTYRHKVVKVMRPAAEGKTVMDVISREDQRGSGQVVTYALNTFTNIAVQLVRLMEAEGVIGPQHLEQLPRKNKIAVRTWLFENGEERVTRMAISGDDCVVKPLDDRFATALHFLNAMSKVRKDIQEWKPSHGWHDWQQVPFCSNHFQEIVMKDGRSIVVPCRGQDELIDRARISPGAGWNVKDTACLAKAYAQMWLLLYFHRRDLRLMANAICSAVPVDWVPTGRTSWSIHSKGEWMTTEDMLQVWNRVWIEENEWMMDKTPITSWTDVPYVGKREDIWCGSLIGTRSRATWAENIYAAINQVRAVIGKENYVDYMTSLRRYEDVLIQEDRVI.

The interval 2 to 15 is interaction with host EXOC1; sequence TKKPGGPGKNRAIN. Over 2-109 the chain is Cytoplasmic; sequence TKKPGGPGKN…RKQNKRGGNE (108 aa). Positions 37-72 are hydrophobic; homodimerization of capsid protein C; the sequence is LLDGRGPVRFVLALITFFKFTALAPTKALLGRWKAV. The propeptide at 106–127 is ER anchor for the capsid protein C, removed in mature form by serine protease NS3; it reads GGNEGSIMWLASLAVVIACAGA. Residues 110–130 form a helical membrane-spanning segment; sequence GSIMWLASLAVVIACAGAMKL. Residues 131-253 are Extracellular-facing; it reads SNFQGKLLMT…ATRYLMKTEN (123 aa). Asn-142 is a glycosylation site (N-linked (GlcNAc...) asparagine; by host). The chain crosses the membrane as a helical span at residues 254–274; sequence WIIRNPGYAFLAAVLGWMLGS. Residues 275–279 are Cytoplasmic-facing; sequence NNGQR. Residues 280 to 294 traverse the membrane as a helical segment; it reads VVFTILLLLVAPAYS. Residues 295–746 are Extracellular-facing; sequence FNCLGMGNRD…QVFGGAFRTL (452 aa). 6 disulfide bridges follow: Cys-297-Cys-324, Cys-354-Cys-410, Cys-354-Cys-415, Cys-368-Cys-399, Cys-386-Cys-410, and Cys-386-Cys-415. The interval 392–405 is fusion peptide; the sequence is DRGWGNGCGLFGKG. Residue Asn-448 is glycosylated (N-linked (GlcNAc...) asparagine; by host). Disulfide bonds link Cys-484-Cys-581 and Cys-598-Cys-629. Residues 747–767 traverse the membrane as a helical segment; it reads FGGMSWITQGLMGALLLWMGV. The Cytoplasmic segment spans residues 768–773; that stretch reads NARDRS. Residues 774–794 traverse the membrane as a helical segment; the sequence is IALAFLATGGVLVFLATNVHA. Residues 795 to 1219 are Extracellular-facing; it reads DTGCAIDITR…AFAEANSGGD (425 aa). Intrachain disulfides connect Cys-798–Cys-809, Cys-849–Cys-937, Cys-973–Cys-1017, Cys-1074–Cys-1123, Cys-1085–Cys-1106, and Cys-1107–Cys-1110. Residues Asn-924 and Asn-1001 are each glycosylated (N-linked (GlcNAc...) asparagine; by host). A helical transmembrane segment spans residues 1220 to 1240; the sequence is VLHLALIAVFKIQPAFLVMNM. Residues 1241-1250 lie on the Cytoplasmic side of the membrane; the sequence is LSTRWTNQEN. Residues 1251-1271 form a helical membrane-spanning segment; that stretch reads VVLVLGAAFFQLASVDLQIGV. Position 1272 (His-1272) is a topological domain, lumenal. The helical transmembrane segment at 1273–1293 threads the bilayer; that stretch reads GILNAAAIAWMIVRAITFPTT. At 1294 to 1309 the chain is on the cytoplasmic side; sequence SSVTMPVLALLTPGMR. The chain crosses the membrane as a helical span at residues 1310 to 1330; the sequence is ALYLDTYRIILLVIGICSLLH. The Lumenal segment spans residues 1331-1341; the sequence is ERKKTMAKKKG. The helical transmembrane segment at 1342–1362 threads the bilayer; it reads AVLLGLALTSTGWFSPTTIAA. Residues 1363–1374 lie on the Cytoplasmic side of the membrane; sequence GLMVCNPNKKRG. A helical transmembrane segment spans residues 1375–1395; the sequence is WPATEFLSAVGLMFAIVGGLA. Residues 1396 to 1398 lie on the Lumenal side of the membrane; sequence ELD. Residues 1399 to 1419 traverse the membrane as a helical segment; that stretch reads IESMSIPFMLAGLMAVSYVVS. Residues 1420-1476 lie on the Cytoplasmic side of the membrane; it reads GKATDMWLERAADISWEMDAAITGSSRRLDVKLDDDGDFHLIDDPGVPWKVWVLRMS. The interacts with and activates NS3 protease stretch occupies residues 1427–1466; the sequence is LERAADISWEMDAAITGSSRRLDVKLDDDGDFHLIDDPGV. The segment at residues 1477-1497 is an intramembrane region (helical); it reads CIGLAALTPWAIVPAAFGYWL. Residues 1498 to 2173 lie on the Cytoplasmic side of the membrane; it reads TLKTTKRGGV…RMALEELPDA (676 aa). Residues 1505-1682 form the Peptidase S7 domain; that stretch reads GGVFWDTPSP…DRQEEPVPEA (178 aa). Active-site charge relay system; for serine protease NS3 activity residues include His-1555, Asp-1579, and Ser-1639. The 157-residue stretch at 1685–1841 folds into the Helicase ATP-binding domain; that stretch reads PNMLRKRQMT…DSNAPIHDLQ (157 aa). Residues 1689–1692 are important for RNA-binding; that stretch reads RKRQ. 1698-1705 is a binding site for ATP; that stretch reads LHPGSGKT. A DEAH box motif is present at residues 1789 to 1792; it reads DEAH. The region spanning 1852–2017 is the Helicase C-terminal domain; sequence GYEWITEYAG…GLVAQLYGPE (166 aa). Lys-1893 carries the post-translational modification N6-acetyllysine; by host. Positions 1950–1972 are disordered; sequence NPSPITSASAAQRRGRVGRNPNQ. A regulates the ATPase activity of NS3 helicase region spans residues 2168–2172; the sequence is EELPD. Residues 2174–2194 form a helical membrane-spanning segment; the sequence is LETITLIVAITVMTGGFFLLM. Residues 2195-2199 are Lumenal-facing; it reads MQRKG. An intramembrane region (helical) is located at residues 2200–2220; that stretch reads IGKMGLGALVLTLATFFLWAA. Glu-2221 is a topological domain (lumenal). Residues 2222–2242 traverse the membrane as a helical segment; it reads VPGTKIAGTLLIALLLMVVLI. Topologically, residues 2243–2257 are cytoplasmic; the sequence is PEPEKQRSQTDNQLA. A helical membrane pass occupies residues 2258–2278; it reads VFLICVLTVVGVVAANEYGML. The Lumenal portion of the chain corresponds to 2279-2311; that stretch reads EKTKADLKSMFGGKTQASGLTGLPSMALDLRPA. The segment at residues 2312–2332 is an intramembrane region (helical); that stretch reads TAWALYGGSTVVLTPLLKHLI. Residues 2333–2368 are Lumenal-facing; that stretch reads TSEYVTTSLASINSQAGSLFVLPRGVPFTDLDLTVG. A helical transmembrane segment spans residues 2369–2389; that stretch reads LVFLGCWGQITLTTFLTAMVL. Residues 2390-2444 are Cytoplasmic-facing; the sequence is ATLHYGYMLPGWQAEALRAAQRRTAAGIMKNAVVDGMVATDVPELERTTPLMQKK. A helical transmembrane segment spans residues 2445–2465; sequence VGQVLLIGVSVAAFLVNPNVT. Over 2466–2469 the chain is Lumenal; that stretch reads TVRE. Residues 2470–2490 form a helical membrane-spanning segment; the sequence is AGVLVTAATLTLWDNGASAVW. The Cytoplasmic segment spans residues 2491-3432; that stretch reads NSTTATGLCH…DVLIQEDRVI (942 aa). The mRNA cap 0-1 NS5-type MT domain maps to 2528 to 2793; it reads GRPGGRTLGE…DVNLGSGTRA (266 aa). Ser-2583 lines the S-adenosyl-L-methionine pocket. Ser-2583 bears the Phosphoserine mark. Lys-2588 serves as the catalytic For 2'-O-MTase activity. Residues Gly-2613, Trp-2614, Thr-2631, Lys-2632, Asp-2658, and Val-2659 each contribute to the S-adenosyl-L-methionine site. Asp-2673 (for 2'-O-MTase activity) is an active-site residue. Ile-2674 contacts S-adenosyl-L-methionine. Residues Lys-2709 and Glu-2745 each act as for 2'-O-MTase activity in the active site. Tyr-2747 contacts S-adenosyl-L-methionine. Residues Glu-2967, His-2971, Cys-2976, and Cys-2979 each contribute to the Zn(2+) site. The 153-residue stretch at 3057-3209 folds into the RdRp catalytic domain; it reads GKMYADDTAG…KPLDDRFATA (153 aa). His-3244, Cys-3260, and Cys-3379 together coordinate Zn(2+).

In the N-terminal section; belongs to the class I-like SAM-binding methyltransferase superfamily. mRNA cap 0-1 NS5-type methyltransferase family. In terms of assembly, homodimer. Interacts (via N-terminus) with host EXOC1 (via C-terminus); this interaction results in EXOC1 degradation through the proteasome degradation pathway. Forms heterodimers with envelope protein E in the endoplasmic reticulum and Golgi. As to quaternary structure, homodimer; in the endoplasmic reticulum and Golgi. Interacts with protein prM. Interacts with non-structural protein 1. Interacts with host HSPA5. In terms of assembly, homodimer; Homohexamer when secreted. Interacts with envelope protein E. NS1 interacts with NS4B. Interacts with host complement protein CFH; this interaction leads to the degradation of C3. Interacts (via N-terminus) with serine protease NS3. As to quaternary structure, forms a heterodimer with serine protease NS3. May form homooligomers. In terms of assembly, forms a heterodimer with NS2B. Interacts with non-structural protein 2A (via N-terminus). Interacts with NS4B. Interacts with unphosphorylated RNA-directed RNA polymerase NS5; this interaction stimulates RNA-directed RNA polymerase NS5 guanylyltransferase activity. Interacts with host ILF2. Interacts with serine protease NS3. As to quaternary structure, homodimer. Interacts with host STAT2; this interaction inhibits the phosphorylation of the latter, and, when all viral proteins are present (polyprotein), targets STAT2 for degradation. Interacts with serine protease NS3. Mn(2+) is required as a cofactor. Mg(2+) serves as cofactor. Specific enzymatic cleavages in vivo yield mature proteins. Cleavages in the lumen of endoplasmic reticulum are performed by host signal peptidase, whereas cleavages in the cytoplasmic side are performed by serine protease NS3. Signal cleavage at the 2K-4B site requires a prior NS3 protease-mediated cleavage at the 4A-2K site. Post-translationally, cleaved in post-Golgi vesicles by a host furin, releasing the mature small envelope protein M, and peptide pr. This cleavage is incomplete as up to 30% of viral particles still carry uncleaved prM. In terms of processing, N-glycosylated. N-glycosylated. The excreted form is glycosylated and this is required for efficient secretion of the protein from infected cells. Post-translationally, acetylated by host KAT5. Acetylation modulates NS3 RNA-binding and unwinding activities and plays an important positive role for viral replication. In terms of processing, phosphorylated on serines residues. This phosphorylation may trigger NS5 nuclear localization.

Its subcellular location is the virion. The protein localises to the host nucleus. It is found in the host cytoplasm. The protein resides in the host perinuclear region. It localises to the secreted. Its subcellular location is the virion membrane. The protein localises to the host endoplasmic reticulum membrane. It is found in the host cell surface. It carries out the reaction Selective hydrolysis of -Xaa-Xaa-|-Yaa- bonds in which each of the Xaa can be either Arg or Lys and Yaa can be either Ser or Ala.. The catalysed reaction is RNA(n) + a ribonucleoside 5'-triphosphate = RNA(n+1) + diphosphate. The enzyme catalyses a ribonucleoside 5'-triphosphate + H2O = a ribonucleoside 5'-diphosphate + phosphate + H(+). It catalyses the reaction ATP + H2O = ADP + phosphate + H(+). It carries out the reaction a 5'-end (5'-triphosphoguanosine)-ribonucleoside in mRNA + S-adenosyl-L-methionine = a 5'-end (N(7)-methyl 5'-triphosphoguanosine)-ribonucleoside in mRNA + S-adenosyl-L-homocysteine. The catalysed reaction is a 5'-end (N(7)-methyl 5'-triphosphoguanosine)-ribonucleoside in mRNA + S-adenosyl-L-methionine = a 5'-end (N(7)-methyl 5'-triphosphoguanosine)-(2'-O-methyl-ribonucleoside) in mRNA + S-adenosyl-L-homocysteine + H(+). Functionally, plays a role in virus budding by binding to the cell membrane and gathering the viral RNA into a nucleocapsid that forms the core of a mature virus particle. During virus entry, may induce genome penetration into the host cytoplasm after hemifusion induced by the surface proteins. Can migrate to the cell nucleus where it modulates host functions. Overcomes the anti-viral effects of host EXOC1 by sequestering and degrading the latter through the proteasome degradation pathway. Inhibits RNA silencing by interfering with host Dicer. Its function is as follows. Prevents premature fusion activity of envelope proteins in trans-Golgi by binding to envelope protein E at pH6.0. After virion release in extracellular space, gets dissociated from E dimers. In terms of biological role, acts as a chaperone for envelope protein E during intracellular virion assembly by masking and inactivating envelope protein E fusion peptide. prM is the only viral peptide matured by host furin in the trans-Golgi network probably to avoid catastrophic activation of the viral fusion activity in acidic Golgi compartment prior to virion release. prM-E cleavage is inefficient, and many virions are only partially matured. These uncleaved prM would play a role in immune evasion. Functionally, may play a role in virus budding. Exerts cytotoxic effects by activating a mitochondrial apoptotic pathway through M ectodomain. May display a viroporin activity. Binds to host cell surface receptor and mediates fusion between viral and cellular membranes. Efficient virus attachment to cell is, at least in part, mediated by host HSPA5. Envelope protein is synthesized in the endoplasmic reticulum in the form of heterodimer with protein prM. They play a role in virion budding in the ER, and the newly formed immature particle is covered with 60 spikes composed of heterodimer between precursor prM and envelope protein E. The virion is transported to the Golgi apparatus where the low pH causes dissociation of PrM-E heterodimers and formation of E homodimers. prM-E cleavage is inefficient, and many virions are only partially matured. These uncleaved prM would play a role in immune evasion. Its function is as follows. Involved in immune evasion, pathogenesis and viral replication. Once cleaved off the polyprotein, is targeted to three destinations: the viral replication cycle, the plasma membrane and the extracellular compartment. Essential for viral replication. Required for formation of the replication complex and recruitment of other non-structural proteins to the ER-derived membrane structures. Excreted as a hexameric lipoparticle that plays a role against host immune response. Antagonizing the complement function. Binds to the host macrophages and dendritic cells. Inhibits signal transduction originating from Toll-like receptor 3 (TLR3). In terms of biological role, component of the viral RNA replication complex that functions in virion assembly and antagonizes the host alpha/beta interferon antiviral response. Functionally, required cofactor for the serine protease function of NS3. May have membrane-destabilizing activity and form viroporins. Displays three enzymatic activities: serine protease, NTPase and RNA helicase. NS3 serine protease, in association with NS2B, performs its autocleavage and cleaves the polyprotein at dibasic sites in the cytoplasm: C-prM, NS2A-NS2B, NS2B-NS3, NS3-NS4A, NS4A-2K and NS4B-NS5. NS3 RNA helicase binds RNA and unwinds dsRNA in the 3' to 5' direction. Its function is as follows. Regulates the ATPase activity of the NS3 helicase activity. NS4A allows NS3 helicase to conserve energy during unwinding. In terms of biological role, functions as a signal peptide for NS4B and is required for the interferon antagonism activity of the latter. Functionally, induces the formation of ER-derived membrane vesicles where the viral replication takes place. Inhibits interferon (IFN)-induced host STAT1 phosphorylation and nuclear translocation, thereby preventing the establishment of cellular antiviral state by blocking the IFN-alpha/beta pathway. Inhibits STAT2 translocation in the nucleus after IFN-alpha treatment. Replicates the viral (+) and (-) RNA genome. Performs the capping of genomes in the cytoplasm. NS5 methylates viral RNA cap at guanine N-7 and ribose 2'-O positions. Besides its role in RNA genome replication, also prevents the establishment of cellular antiviral state by blocking the interferon-alpha/beta (IFN-alpha/beta) signaling pathway. Inhibits host TYK2 and STAT2 phosphorylation, thereby preventing activation of JAK-STAT signaling pathway. In Ardeidae (herons), this protein is Genome polyprotein.